We begin with the raw amino-acid sequence, 343 residues long: UDP-N-acetylglucosamine--N-acetylmuramyl-(pentapeptide) pyrophosphoryl-undecaprenol N-acetylglucosamine transferase (343 aa).

UDP-N-acetyl-alpha-D-glucosamine is bound by residues 10 to 12 (TGG), Asn-113, Ser-174, and Gln-275.

This sequence belongs to the glycosyltransferase 28 family. MurG subfamily.

Its subcellular location is the cell membrane. The enzyme catalyses di-trans,octa-cis-undecaprenyl diphospho-N-acetyl-alpha-D-muramoyl-L-alanyl-D-glutamyl-meso-2,6-diaminopimeloyl-D-alanyl-D-alanine + UDP-N-acetyl-alpha-D-glucosamine = di-trans,octa-cis-undecaprenyl diphospho-[N-acetyl-alpha-D-glucosaminyl-(1-&gt;4)]-N-acetyl-alpha-D-muramoyl-L-alanyl-D-glutamyl-meso-2,6-diaminopimeloyl-D-alanyl-D-alanine + UDP + H(+). It functions in the pathway cell wall biogenesis; peptidoglycan biosynthesis. In terms of biological role, cell wall formation. Catalyzes the transfer of a GlcNAc subunit on undecaprenyl-pyrophosphoryl-MurNAc-pentapeptide (lipid intermediate I) to form undecaprenyl-pyrophosphoryl-MurNAc-(pentapeptide)GlcNAc (lipid intermediate II). In Wolbachia sp. subsp. Brugia malayi (strain TRS), this protein is UDP-N-acetylglucosamine--N-acetylmuramyl-(pentapeptide) pyrophosphoryl-undecaprenol N-acetylglucosamine transferase.